Consider the following 190-residue polypeptide: Adenylate kinase (190 aa).

Residue 12–17 coordinates ATP; it reads GSGKTT. Residues 33–62 form an NMP region; it reads STGDLLRAEVASGSELGKTIDSFISKGNLV. Residues Thr-34, Arg-39, 60-62, 87-90, and Gln-94 contribute to the AMP site; these read NLV and GYPR. Residues 129-135 are LID; the sequence is GRARGAD. Arg-130 is a binding site for ATP. AMP-binding residues include Arg-132 and Arg-144. Arg-172 provides a ligand contact to ATP.

This sequence belongs to the adenylate kinase family. Monomer.

The protein localises to the cytoplasm. It carries out the reaction AMP + ATP = 2 ADP. Its pathway is purine metabolism; AMP biosynthesis via salvage pathway; AMP from ADP: step 1/1. Its function is as follows. Catalyzes the reversible transfer of the terminal phosphate group between ATP and AMP. Plays an important role in cellular energy homeostasis and in adenine nucleotide metabolism. In Campylobacter lari (strain RM2100 / D67 / ATCC BAA-1060), this protein is Adenylate kinase.